Here is an 89-residue protein sequence, read N- to C-terminus: Small ribosomal subunit protein uS15 (89 aa).

The protein belongs to the universal ribosomal protein uS15 family. Part of the 30S ribosomal subunit. Forms a bridge to the 50S subunit in the 70S ribosome, contacting the 23S rRNA.

Its function is as follows. One of the primary rRNA binding proteins, it binds directly to 16S rRNA where it helps nucleate assembly of the platform of the 30S subunit by binding and bridging several RNA helices of the 16S rRNA. Functionally, forms an intersubunit bridge (bridge B4) with the 23S rRNA of the 50S subunit in the ribosome. This chain is Small ribosomal subunit protein uS15, found in Roseiflexus castenholzii (strain DSM 13941 / HLO8).